The sequence spans 291 residues: Neugrin (291 aa).

The signal sequence occupies residues 1–15; it reads MAVTLSLLLGGRVCA. Disordered regions lie at residues 26–48 and 155–270; these read GVAG…PEER and GSGN…DNFS. Ser-41 is modified (phosphoserine). N-linked (GlcNAc...) asparagine glycans are attached at residues Asn-158 and Asn-186. Residues 236-246 are compositionally biased toward polar residues; that stretch reads KYSSDSESPRG. Asn-268 carries N-linked (GlcNAc...) asparagine glycosylation.

Belongs to the neugrin family. In terms of assembly, forms a regulatory protein-RNA complex, consisting of RCC1L, NGRN, RPUSD3, RPUSD4, TRUB2, FASTKD2 and 16S mt-rRNA. Interacts with 16S mt-rRNA; this interaction is direct. In terms of tissue distribution, expressed at high levels in heart, brain and skeletal muscle. In brain, mainly expressed in neurons rather than glial cells.

The protein resides in the nucleus. It localises to the secreted. The protein localises to the mitochondrion membrane. Plays an essential role in mitochondrial ribosome biogenesis. As a component of a functional protein-RNA module, consisting of RCC1L, NGRN, RPUSD3, RPUSD4, TRUB2, FASTKD2 and 16S mitochondrial ribosomal RNA (16S mt-rRNA), controls 16S mt-rRNA abundance and is required for intra-mitochondrial translation of core subunits of the oxidative phosphorylation system. This Homo sapiens (Human) protein is Neugrin.